The primary structure comprises 636 residues: Threonine--tRNA ligase (636 aa).

Residues 1–61 (MPVITLPDGS…TQDVSLSIIT (61 aa)) enclose the TGS domain. The segment at 242-533 (DHRKLGKKFD…LIEEYEGAFP (292 aa)) is catalytic. Residues cysteine 333, histidine 384, and histidine 510 each coordinate Zn(2+).

It belongs to the class-II aminoacyl-tRNA synthetase family. In terms of assembly, homodimer. Zn(2+) serves as cofactor.

It localises to the cytoplasm. The enzyme catalyses tRNA(Thr) + L-threonine + ATP = L-threonyl-tRNA(Thr) + AMP + diphosphate + H(+). Functionally, catalyzes the attachment of threonine to tRNA(Thr) in a two-step reaction: L-threonine is first activated by ATP to form Thr-AMP and then transferred to the acceptor end of tRNA(Thr). Also edits incorrectly charged L-seryl-tRNA(Thr). This is Threonine--tRNA ligase from Saccharophagus degradans (strain 2-40 / ATCC 43961 / DSM 17024).